The primary structure comprises 393 residues: Proteasome-activating nucleotidase (393 aa).

Positions 14 to 53 form a coiled coil; that stretch reads SDEVQLVRLLEEKIKSLQIEIENLRKELNYYKAEMEKMLS. ATP contacts are provided by residues 178–183 and Y317; that span reads GTGKTM. Positions 391 to 393 are docks into pockets in the proteasome alpha-ring to cause gate opening; that stretch reads KYS.

This sequence belongs to the AAA ATPase family. As to quaternary structure, homohexamer. The hexameric complex has a two-ring architecture resembling a top hat that caps the 20S proteasome core at one or both ends. Upon ATP-binding, the C-terminus of PAN interacts with the alpha-rings of the proteasome core by binding to the intersubunit pockets.

It localises to the cytoplasm. ATPase which is responsible for recognizing, binding, unfolding and translocation of substrate proteins into the archaeal 20S proteasome core particle. Is essential for opening the gate of the 20S proteasome via an interaction with its C-terminus, thereby allowing substrate entry and access to the site of proteolysis. Thus, the C-termini of the proteasomal ATPase function like a 'key in a lock' to induce gate opening and therefore regulate proteolysis. Unfolding activity requires energy from ATP hydrolysis, whereas ATP binding alone promotes ATPase-20S proteasome association which triggers gate opening, and supports translocation of unfolded substrates. The protein is Proteasome-activating nucleotidase of Saccharolobus islandicus (strain Y.N.15.51 / Yellowstone #2) (Sulfolobus islandicus).